Here is a 76-residue protein sequence, read N- to C-terminus: NADH-ubiquinone oxidoreductase chain 4L (76 aa).

The next 3 helical transmembrane spans lie at 1-21 (MTPV…GLAF), 29-49 (ALLC…LWAL), and 56-76 (YSVA…AGLA).

It belongs to the complex I subunit 4L family.

Its subcellular location is the mitochondrion membrane. The enzyme catalyses a ubiquinone + NADH + 5 H(+)(in) = a ubiquinol + NAD(+) + 4 H(+)(out). Its function is as follows. Core subunit of the mitochondrial membrane respiratory chain NADH dehydrogenase (Complex I) which catalyzes electron transfer from NADH through the respiratory chain, using ubiquinone as an electron acceptor. Part of the enzyme membrane arm which is embedded in the lipid bilayer and involved in proton translocation. The chain is NADH-ubiquinone oxidoreductase chain 4L (MT-ND4L) from Oncorhynchus masou (Cherry salmon).